A 128-amino-acid chain; its full sequence is MDIIREIESEMLRKDIPDFKPGDTVRVYFKVIEGGRERVQAFEGLVIKRRGKGLSETFTVRRISYGIGVERVFPLHSPRLEKIEVIRRGKVRRAKLYYIREKIGKAAKIKELVQQPDKENNNTEETNA.

This sequence belongs to the bacterial ribosomal protein bL19 family.

In terms of biological role, this protein is located at the 30S-50S ribosomal subunit interface and may play a role in the structure and function of the aminoacyl-tRNA binding site. The chain is Large ribosomal subunit protein bL19 from Caldicellulosiruptor bescii (strain ATCC BAA-1888 / DSM 6725 / KCTC 15123 / Z-1320) (Anaerocellum thermophilum).